Reading from the N-terminus, the 540-residue chain is Zinc finger CCCH domain-containing protein 46 (540 aa).

Residues 148 to 175 (GFGGVPCSYFARGFCKNGASCRFVHSDG) form a C3H1-type zinc finger. Positions 258-334 (RQIYLTFPAD…RVLVKPYKEK (77 aa)) constitute an RRM domain. Basic and acidic residues-rich tracts occupy residues 337-351 (VPDK…EREL) and 436-450 (EYDG…SKEG). 3 disordered regions span residues 337–365 (VPDK…DVLG), 436–469 (EYDG…LPDS), and 490–514 (SDLW…SFNS). Position 451 is a phosphoserine (Ser451). Low complexity predominate over residues 490–511 (SDLWSPSSDNDDNSTPSTLSDS).

In terms of biological role, possesses RNA-binding and ribonuclease activities in vitro. This chain is Zinc finger CCCH domain-containing protein 46, found in Arabidopsis thaliana (Mouse-ear cress).